Consider the following 312-residue polypeptide: Malate dehydrogenase (312 aa).

Residues 7-13 and aspartate 34 contribute to the NAD(+) site; that span reads GAAGGIG. Arginine 81 and arginine 87 together coordinate substrate. Residues asparagine 94 and 117-119 each bind NAD(+); that span reads ITN. Positions 119 and 153 each coordinate substrate. The active-site Proton acceptor is the histidine 177. Methionine 227 serves as a coordination point for NAD(+).

The protein belongs to the LDH/MDH superfamily. MDH type 1 family. In terms of assembly, homodimer.

The catalysed reaction is (S)-malate + NAD(+) = oxaloacetate + NADH + H(+). In terms of biological role, catalyzes the reversible oxidation of malate to oxaloacetate. The chain is Malate dehydrogenase from Edwardsiella ictaluri (strain 93-146).